The sequence spans 371 residues: Gamma-tocopherol methyltransferase, chloroplastic (371 aa).

The transit peptide at 1 to 65 (MAAAPVFFPS…NSNRIASRLQ (65 aa)) directs the protein to the chloroplast. Positions 153–162 (IVDVGCGIGG) are SAM motif I. Residues 216–224 (GQFDLVWSM) form an SAM motif II region. Residues 243-252 (VAAPGATIII) are SAM motif III.

Belongs to the class I-like SAM-binding methyltransferase superfamily. gTMT family. In terms of assembly, homodimer.

The protein localises to the plastid. Its subcellular location is the chloroplast inner membrane. The catalysed reaction is picrinine + S-adenosyl-L-methionine = ervincine + S-adenosyl-L-homocysteine + H(+). The protein operates within alkaloid biosynthesis; vindoline biosynthesis. Functionally, S-adenosyl-L-methionine-dependent N-methyltransferase involved in the biosynthesis of biologically active monoterpenoid indole alkaloids (MIAs) natural products including vindoline. Inactive with picrinine as substrate. The sequence is that of Gamma-tocopherol methyltransferase, chloroplastic from Catharanthus roseus (Madagascar periwinkle).